Reading from the N-terminus, the 206-residue chain is Protein GrpE (206 aa).

Residues 1–18 show a composition bias toward basic and acidic residues; it reads MNNEDKKLQDEQLQKETV. Residues 1 to 21 are disordered; it reads MNNEDKKLQDEQLQKETVEAA.

Belongs to the GrpE family. As to quaternary structure, homodimer.

The protein localises to the cytoplasm. Its function is as follows. Participates actively in the response to hyperosmotic and heat shock by preventing the aggregation of stress-denatured proteins, in association with DnaK and GrpE. It is the nucleotide exchange factor for DnaK and may function as a thermosensor. Unfolded proteins bind initially to DnaJ; upon interaction with the DnaJ-bound protein, DnaK hydrolyzes its bound ATP, resulting in the formation of a stable complex. GrpE releases ADP from DnaK; ATP binding to DnaK triggers the release of the substrate protein, thus completing the reaction cycle. Several rounds of ATP-dependent interactions between DnaJ, DnaK and GrpE are required for fully efficient folding. The polypeptide is Protein GrpE (Photobacterium profundum (strain SS9)).